Reading from the N-terminus, the 389-residue chain is Flagellar P-ring protein (389 aa).

Residues 1 to 33 (MRPLVAARRRAAACCALAACMLALAFAPAAARA) form the signal peptide.

Belongs to the FlgI family. In terms of assembly, the basal body constitutes a major portion of the flagellar organelle and consists of four rings (L,P,S, and M) mounted on a central rod.

The protein localises to the periplasm. The protein resides in the bacterial flagellum basal body. Assembles around the rod to form the L-ring and probably protects the motor/basal body from shearing forces during rotation. In Burkholderia mallei (strain ATCC 23344), this protein is Flagellar P-ring protein.